Here is a 215-residue protein sequence, read N- to C-terminus: MVLQTMIVRVADSLPLAASMQEDEQSGRDLQKYQSQAKQLCRKLNEQSPARCTLEAGKMCFHYVIEKGVCYLALCEAGFPKKLAFAYLEDLEGEFSEQYGAKVPSVSRPYSFIEFDTYIQKTIKSYIDSRARRNLGNINSELHDVQRIMVANIEEVLQRGEALSALDSKASNLSSLSKKYRSDAKYLNTRSTYAKVAAGAVIIITLIIYVRFWWL.

Residues 1–190 (MVLQTMIVRV…RSDAKYLNTR (190 aa)) lie on the Cytoplasmic side of the membrane. Positions 6–119 (MIVRVADSLP…YSFIEFDTYI (114 aa)) constitute a Longin domain. One can recognise a v-SNARE coiled-coil homology domain in the interval 134-194 (NLGNINSELH…KYLNTRSTYA (61 aa)). A helical transmembrane segment spans residues 191–213 (STYAKVAAGAVIIITLIIYVRFW). Residues 214–215 (WL) lie on the Lumenal side of the membrane.

The protein belongs to the synaptobrevin family. Component of 2 distinct SNARE complexes.

It is found in the endoplasmic reticulum membrane. The protein resides in the endoplasmic reticulum-Golgi intermediate compartment membrane. Its subcellular location is the golgi apparatus. The protein localises to the cis-Golgi network membrane. It localises to the trans-Golgi network membrane. It is found in the melanosome. SNARE involved in targeting and fusion of ER-derived transport vesicles with the Golgi complex as well as Golgi-derived retrograde transport vesicles with the ER. The protein is Vesicle-trafficking protein SEC22b-A of Danio rerio (Zebrafish).